The sequence spans 291 residues: Protease HtpX (291 aa).

A run of 2 helical transmembrane segments spans residues 4 to 24 (IALFLATNLAVMIVFSIVLNI) and 36 to 56 (LSGLLVMAVLFGFGGSLISLM). Histidine 143 lines the Zn(2+) pocket. Glutamate 144 is an active-site residue. Histidine 147 contacts Zn(2+). 2 helical membrane passes run 151 to 171 (GDMITMTLMQGVVNTFVIFLS) and 199 to 219 (FIVSTILELAFGFLASFLTMW). Zn(2+) is bound at residue glutamate 225.

It belongs to the peptidase M48B family. It depends on Zn(2+) as a cofactor.

Its subcellular location is the cell inner membrane. The protein is Protease HtpX of Aliivibrio fischeri (strain MJ11) (Vibrio fischeri).